The primary structure comprises 37 residues: M-oxotoxin-Ot2a (37 aa).

As to expression, expressed by the venom gland.

The protein resides in the secreted. In terms of biological role, disrupts biological membranes, particularly those rich in phosphocholine. Has antimicrobial activity against Gram-negative bacterium E.coli, Gram-positive bacteria B.subtilis and S.aureus, and hemolytic activity against sheep, pig and guinea pig red blood cells. Has insecticidal activity against S.frugiperda ovarian cells by opening non-selective ion channels. Enhances the insecticidal activity of spider venom neurotoxic peptides. The polypeptide is M-oxotoxin-Ot2a (Oxyopes takobius (Lynx spider)).